The primary structure comprises 540 residues: Acyl-CoA synthetase 7 (540 aa).

ATP-binding positions include 186–194 (SSGTTGKPK), Asp-415, Arg-430, and Lys-522. The short motif at 538-540 (AKL) is the Microbody targeting signal element.

It belongs to the ATP-dependent AMP-binding enzyme family. In terms of tissue distribution, expressed in intestine.

It is found in the peroxisome. The enzyme catalyses nonanoate + ATP + CoA = nonanoyl-CoA + AMP + diphosphate. It catalyses the reaction IC-asc-C7 + ATP + CoA = IC-asc-C7-CoA + AMP + diphosphate. It carries out the reaction IC-asc-C9 + ATP + CoA = IC-asc-C9-CoA + AMP + diphosphate. In terms of biological role, plays a role in ascaroside pheromones biosynthesis, which regulates development and behavior. Specifically, activates the side chain of medium-chain indol-3-carbonyl (IC)-ascarosides for shortening through beta-oxidation. Converts IC-asc-C7 and IC-asc-C9 into IC-asc-C7-CoA and IC-asc-C9-CoA, respectively. May play a role in fatty-acid metabolism by activating and converting nonanoate (C9) into nonanoyl-CoA (C9-CoA). The chain is Acyl-CoA synthetase 7 from Caenorhabditis elegans.